The primary structure comprises 1135 residues: Retinoblastoma-like protein 2 (1135 aa).

The interval 1-43 is disordered; the sequence is MASGGNQSPPPPPAAAASSEEEEEDGDAADRAQPAGSPSHQIQ. Ser410 carries the phosphoserine modification. A Phosphothreonine modification is found at Thr414. The segment at 414-613 is domain A; that stretch reads TPVSTAAHSL…DRIRDNENRV (200 aa). The segment at 414–1021 is pocket; binds E1A; the sequence is TPVSTAAHSL…QAFAMKYSQA (608 aa). An O-linked (GlcNAc) serine glycan is attached at Ser417. The segment at 614–824 is spacer; sequence PTCEEVMPPQ…PGQPLTSSSI (211 aa). Position 636 is a phosphoserine (Ser636). Thr639 carries the post-translational modification Phosphothreonine. Phosphoserine occurs at positions 659, 669, 684, 942, 946, 960, 965, and 967. 4 stretches are compositionally biased toward polar residues: residues 661–674, 683–692, 935–950, and 958–969; these read TTLYDRYSSPTVST, DSPSEGSTSG, SGSSESRSHQNSPTEL, and DSSPVMRSNSTL. Disordered regions lie at residues 661-698 and 930-994; these read TTLYDRYSSPTVSTTRRRLFENDSPSEGSTSGRIPPQP and GKRR…VEEE. The domain B stretch occupies residues 825–1021; it reads RPRKTSSLAL…QAFAMKYSQA (197 aa). Thr968 carries the phosphothreonine modification. The segment covering 971–981 has biased composition (pro residues); it reads VPQPSSAPPTP. Ser975 and Ser976 each carry phosphoserine. Thr980 is subject to Phosphothreonine. Phosphoserine is present on residues Ser1031, Ser1064, Ser1076, and Ser1108.

It belongs to the retinoblastoma protein (RB) family. Interacts with AATF and RINT1. Component of the DREAM complex (also named LINC complex) at least composed of E2F4, E2F5, LIN9, LIN37, LIN52, LIN54, MYBL1, MYBL2, RBL1, RBL2, RBBP4, TFDP1 and TFDP2. The complex exists in quiescent cells where it represses cell cycle-dependent genes. It dissociates in S phase when LIN9, LIN37, LIN52 and LIN54 form a subcomplex that binds to MYBL2. Interacts with USP4. Interacts with KMT5B, KMT5C and USP4. Interacts with PML. Interacts with RBBP9. Interacts with CD53. During G0 and early G1 phase of the cell cycle, phosphorylated on Ser-636 and on 5 sites within the domain B. Phosphorylation on Ser-669 in G1 leads to its ubiquitin-dependent proteolysis.

Its subcellular location is the nucleus. Key regulator of entry into cell division. Directly involved in heterochromatin formation by maintaining overall chromatin structure and, in particular, that of constitutive heterochromatin by stabilizing histone methylation. Recruits and targets histone methyltransferases KMT5B and KMT5C, leading to epigenetic transcriptional repression. Controls histone H4 'Lys-20' trimethylation. Probably acts as a transcription repressor by recruiting chromatin-modifying enzymes to promoters. Potent inhibitor of E2F-mediated trans-activation, associates preferentially with E2F5. Binds to cyclins A and E. Binds to and may be involved in the transforming capacity of the adenovirus E1A protein. May act as a tumor suppressor. The polypeptide is Retinoblastoma-like protein 2 (Rbl2) (Mus musculus (Mouse)).